Consider the following 337-residue polypeptide: 2-oxoglutarate receptor 1 (337 aa).

The Extracellular segment spans residues Met-1–Val-38. Asn-23 is a glycosylation site (N-linked (GlcNAc...) asparagine). The chain crosses the membrane as a helical span at residues Ile-39–Ile-59. The Cytoplasmic portion of the chain corresponds to Phe-60–Thr-69. A helical transmembrane segment spans residues Val-70–Ile-90. Residues His-91 to Asn-116 are Extracellular-facing. Cys-106 and Cys-183 are disulfide-bonded. A helical membrane pass occupies residues Leu-117–His-137. At Pro-138–Val-151 the chain is on the cytoplasmic side. Residues Val-152–Ile-172 traverse the membrane as a helical segment. At Thr-173–Leu-200 the chain is on the extracellular side. The helical transmembrane segment at Ile-201–Ile-221 threads the bilayer. Residues Ile-222 to Leu-242 lie on the Cytoplasmic side of the membrane. The chain crosses the membrane as a helical span at residues Thr-243–Ile-263. Residues Arg-264–Tyr-284 are Extracellular-facing. A helical membrane pass occupies residues Ile-285–Val-305. Residues Ser-306–Pro-337 lie on the Cytoplasmic side of the membrane.

This sequence belongs to the G-protein coupled receptor 1 family. In terms of tissue distribution, predominantly expressed in the kidney with limited expression in the testis and the smooth muscle. Expressed in SLC26A4/pendrin-positive type B and non-A non-B intercalated cells (at protein level).

Its subcellular location is the cell membrane. G protein-coupled receptor for dicarboxylates and amino dicarboxylates. Receptor for itaconate produced by activated macrophages upon bacterial infection. In the respiratory epithelium, couples the binding of itaconate to the activation of GNA11 and downstream intracellular Ca(2+) release, leading to mucocilliary clearance of airborne pathogens. Receptor for leukotriene E4 (LTE4) produced by mast cells upon allergic inflammation. Binds with high affinity to LTE4 and elicits mucin release from pulmonary epithelium in response to airborne fungi allergens. Regulates mucin-producing goblet cell homeostasis. Receptor for alpha-ketoglutarate produced by proximal tubule renal cells upon metabolic alkalosis. In an intrarenal paracrine signaling pathway, binds alpha-ketoglutarate and drives transepithelial salt reabsorption and bicarbonate secretion by SLC26A4/pendrin-positive intercalated cells. In Mus musculus (Mouse), this protein is 2-oxoglutarate receptor 1 (Oxgr1).